The chain runs to 2005 residues: Sodium channel protein type 2 subunit alpha (2005 aa).

Residues 1–129 (MAQSVLVPPG…KLAIKILVHS (129 aa)) are Cytoplasmic-facing. Phosphoserine is present on Ser-4. Residues 28-61 (RIAEEKAKRPKQERKDEDDENGPKPNSDLEAGKS) are disordered. Lys-38 is covalently cross-linked (Glycyl lysine isopeptide (Lys-Gly) (interchain with G-Cter in SUMO1)). The stretch at 111 to 456 (ILTPFNPIRK…QQMLEQLKKQ (346 aa)) is one I repeat. Residues 130–148 (LFNMLIMCTILTNCVFMTM) form a helical membrane-spanning segment. Over 149–155 (SNPPDWT) the chain is Extracellular. The chain crosses the membrane as a helical span at residues 156–176 (KNVEYTFTGIYTFESLIKILA). Topologically, residues 177–190 (RGFCLEDFTFLRDP) are cytoplasmic. Residues 191–208 (WNWLDFTVITFAYVTEFV) form a helical membrane-spanning segment. At 209–214 (DLGNVS) the chain is on the extracellular side. Asn-212 carries N-linked (GlcNAc...) asparagine glycosylation. A helical transmembrane segment spans residues 215 to 231 (ALRTFRVLRALKTISVI). The Cytoplasmic segment spans residues 232-250 (PGLKTIVGALIQSVKKLSD). Residues 251–270 (VMILTVFCLSVFALIGLQLF) form a helical membrane-spanning segment. At 271–369 (MGNLRNKCLQ…PNYGYTSFDT (99 aa)) the chain is on the extracellular side. Residues Cys-278 and Cys-338 are joined by a disulfide bond. N-linked (GlcNAc...) asparagine glycans are attached at residues Asn-285, Asn-291, Asn-297, Asn-303, Asn-308, and Asn-340. The pore-forming intramembrane region spans 370-394 (FSWAFLSLFRLMTQDFWENLYQLTL). At 395 to 401 (RAAGKTY) the chain is on the extracellular side. A helical transmembrane segment spans residues 402–422 (MIFFVLVIFLGSFYLINLILA). Topologically, residues 423–759 (VVAMAYEEQN…HLVNLVVMDP (337 aa)) are cytoplasmic. A phosphoserine mark is found at Ser-468, Ser-471, Ser-484, Ser-526, Ser-528, Ser-531, Ser-553, Ser-554, Ser-558, Ser-573, Ser-576, Ser-589, Ser-610, Ser-623, Ser-686, Ser-687, and Ser-721. The segment at 494-529 (SSKSEKELKNRRKKKKQKEQSGEEEKNDRVRKSESE) is disordered. Positions 511–529 (KEQSGEEEKNDRVRKSESE) are enriched in basic and acidic residues. Residues 590 to 610 (ENDFADDEHSTFEDNDSRRDS) form a disordered region. The span at 596–610 (DEHSTFEDNDSRRDS) shows a compositional bias: basic and acidic residues. The II repeat unit spans residues 741–1013 (CCKPWLKVKH…QIAVGRMQKG (273 aa)). A helical transmembrane segment spans residues 760 to 778 (FVDLAITICIVLNTLFMAM). The Extracellular portion of the chain corresponds to 779-789 (EHYPMTEQFSS). Residues 790-809 (VLSVGNLVFTGIFTAEMFLK) traverse the membrane as a helical segment. Topologically, residues 810-823 (IIAMDPYYYFQEGW) are cytoplasmic. Residues 824–843 (NIFDGFIVSLSLMELGLANV) traverse the membrane as a helical segment. At 844 to 845 (EG) the chain is on the extracellular side. The helical transmembrane segment at 846 to 863 (LSVLRSFRLLRVFKLAKS) threads the bilayer. At 864-879 (WPTLNMLIKIIGNSVG) the chain is on the cytoplasmic side. Residues 880 to 898 (ALGNLTLVLAIIVFIFAVV) form a helical membrane-spanning segment. Topologically, residues 899–927 (GMQLFGKSYKECVCKISNDCELPRWHMHD) are extracellular. Cys-912 and Cys-918 form a disulfide bridge. Residues 917–918 (DC) are binds SCN2B. The pore-forming intramembrane region spans 928–948 (FFHSFLIVFRVLCGEWIETMW). Residues 949-961 (DCMEVAGQTMCLT) lie on the Extracellular side of the membrane. Cys-950 and Cys-959 are joined by a disulfide. Residues 962–982 (VFMMVMVIGNLVVLNLFLALL) traverse the membrane as a helical segment. The Cytoplasmic segment spans residues 983-1209 (LSSFSSDNLA…TCYKIVEHNW (227 aa)). Residues 1120 to 1165 (EEFSSESDMEESKEKLNATSSSEGSTVDIGAPAEGEQPEVEPEESL) form a disordered region. Residues 1155 to 1165 (EQPEVEPEESL) are compositionally biased toward acidic residues. An III repeat occupies 1190–1504 (KGKLWWNLRK…KKYYNAMKKL (315 aa)). A helical membrane pass occupies residues 1210 to 1227 (FETFIVFMILLSSGALAF). Topologically, residues 1228–1240 (EDIYIEQRKTIKT) are extracellular. The chain crosses the membrane as a helical span at residues 1241–1259 (MLEYADKVFTYIFILEMLL). Topologically, residues 1260–1273 (KWVAYGFQVYFTNA) are cytoplasmic. The chain crosses the membrane as a helical span at residues 1274–1292 (WCWLDFLIVDVSLVSLTAN). Residues 1293–1300 (ALGYSELG) are Extracellular-facing. The chain crosses the membrane as a helical span at residues 1301–1319 (AIKSLRTLRALRPLRALSR). Residues 1320-1336 (FEGMRVVVNALLGAIPS) are Cytoplasmic-facing. A helical membrane pass occupies residues 1337–1356 (IMNVLLVCLIFWLIFSIMGV). The Extracellular segment spans residues 1357-1408 (NLFAGKFYHCINYTTGEMFDVSVVNNYSECKALIESNQTARWKNVKVNFDNV). Cys-1366 and Cys-1386 are joined by a disulfide. N-linked (GlcNAc...) asparagine glycans are attached at residues Asn-1368, Asn-1382, and Asn-1393. An intramembrane region (pore-forming) is located at residues 1409 to 1430 (GLGYLSLLQVATFKGWMDIMYA). The Extracellular portion of the chain corresponds to 1431-1447 (AVDSRNVELQPKYEDNL). Residues 1448 to 1469 (YMYLYFVIFIIFGSFFTLNLFI) traverse the membrane as a helical segment. At 1470 to 1532 (GVIIDNFNQQ…MVFDFVTKQV (63 aa)) the chain is on the cytoplasmic side. Residue Ser-1506 is modified to Phosphoserine; by PKC. Residues 1513 to 1811 (IPRPANKFQG…WEKFDPDATQ (299 aa)) form an IV repeat. Residues 1533–1550 (FDISIMILICLNMVTMMV) form a helical membrane-spanning segment. The Extracellular portion of the chain corresponds to 1551–1561 (ETDDQSQEMTN). Residues 1562-1580 (ILYWINLVFIVLFTGECVL) traverse the membrane as a helical segment. Residues 1581–1592 (KLISLRYYYFTI) lie on the Cytoplasmic side of the membrane. The helical transmembrane segment at 1593–1610 (GWNIFDFVVVILSIVGMF) threads the bilayer. The Extracellular portion of the chain corresponds to 1611 to 1623 (LAELIEKYFVSPT). A helical transmembrane segment spans residues 1624-1640 (LFRVIRLARIGRILRLI). Over 1641 to 1659 (KGAKGIRTLLFALMMSLPA) the chain is Cytoplasmic. A helical transmembrane segment spans residues 1660 to 1677 (LFNIGLLLFLVMFIYAIF). At 1678–1699 (GMSNFAYVKREVGIDDMFNFET) the chain is on the extracellular side. Residues 1700–1722 (FGNSMICLFQITTSAGWDGLLAP) constitute an intramembrane region (pore-forming). Residues 1723 to 1752 (ILNSGPPDCDPDKDHPGSSVKGDCGNPSVG) lie on the Extracellular side of the membrane. Residues Cys-1731 and Cys-1746 are joined by a disulfide bond. A helical transmembrane segment spans residues 1753-1775 (IFFFVSYIIISFLVVVNMYIAVI). The Cytoplasmic portion of the chain corresponds to 1776–2005 (LENFSVATEE…KGKDIRESKK (230 aa)). One can recognise an IQ domain in the interval 1905–1934 (EEVSAIIIQRAYRRYLLKQKVKKVSSIYKK). The residue at position 1930 (Ser-1930) is a Phosphoserine. A compositionally biased stretch (basic and acidic residues) spans 1935-1964 (DKGKECDGTPIKEDTLIDKLNENSTPEKTD). The tract at residues 1935 to 2005 (DKGKECDGTP…KGKDIRESKK (71 aa)) is disordered. 3 positions are modified to phosphothreonine: Thr-1943, Thr-1963, and Thr-1966. Ser-1971 bears the Phosphoserine mark. The span at 1979 to 2005 (TKPEKEKFEKDKSEKEDKGKDIRESKK) shows a compositional bias: basic and acidic residues.

Belongs to the sodium channel (TC 1.A.1.10) family. Nav1.2/SCN2A subfamily. In terms of assembly, heterooligomer of a large alpha subunit and a smaller beta subunit. Heterooligomer with SCN2B or SCN4B; disulfide-linked. Heterooligomer with SCN1B or SCN3B; non-covalently linked. Interacts with NEDD4L. Interacts with CALM. Interacts with TMEM233. Interacts with the conotoxin GVIIJ. Interacts with the spider beta/delta-theraphotoxin-Pre1a. Interacts with the conotoxin KIIIA. Interacts with the spider protoxin-II. In terms of processing, may be ubiquitinated by NEDD4L; which would promote its endocytosis. Post-translationally, phosphorylation at Ser-1506 by PKC in a highly conserved cytoplasmic loop slows inactivation of the sodium channel and reduces peak sodium currents. Sumoylated at Lys-38. Sumoylation is induced by hypoxia, increases voltage-gated sodium current and mediates the early response to acute hypoxia in neurons. Sumoylated SCN2A is located at the cell membrane.

It localises to the cell membrane. It catalyses the reaction Na(+)(in) = Na(+)(out). Mediates the voltage-dependent sodium ion permeability of excitable membranes. Assuming opened or closed conformations in response to the voltage difference across the membrane, the protein forms a sodium-selective channel through which Na(+) ions may pass in accordance with their electrochemical gradient. Implicated in the regulation of hippocampal replay occurring within sharp wave ripples (SPW-R) important for memory. In Homo sapiens (Human), this protein is Sodium channel protein type 2 subunit alpha.